The following is a 256-amino-acid chain: Imidazole glycerol phosphate synthase subunit HisF (256 aa).

Catalysis depends on residues Asp12 and Asp131.

Belongs to the HisA/HisF family. As to quaternary structure, heterodimer of HisH and HisF.

It is found in the cytoplasm. It catalyses the reaction 5-[(5-phospho-1-deoxy-D-ribulos-1-ylimino)methylamino]-1-(5-phospho-beta-D-ribosyl)imidazole-4-carboxamide + L-glutamine = D-erythro-1-(imidazol-4-yl)glycerol 3-phosphate + 5-amino-1-(5-phospho-beta-D-ribosyl)imidazole-4-carboxamide + L-glutamate + H(+). It functions in the pathway amino-acid biosynthesis; L-histidine biosynthesis; L-histidine from 5-phospho-alpha-D-ribose 1-diphosphate: step 5/9. Its function is as follows. IGPS catalyzes the conversion of PRFAR and glutamine to IGP, AICAR and glutamate. The HisF subunit catalyzes the cyclization activity that produces IGP and AICAR from PRFAR using the ammonia provided by the HisH subunit. In Bifidobacterium longum (strain NCC 2705), this protein is Imidazole glycerol phosphate synthase subunit HisF.